Consider the following 204-residue polypeptide: Kunitz type trypsin inhibitor 106 (204 aa).

The first 26 residues, 1-26 (MSMRLSIRTLIILAHVCLFITTTTIA), serve as a signal peptide directing secretion. N-linked (GlcNAc...) asparagine glycosylation occurs at Asn-62. Residues Cys-65 and Cys-112 are joined by a disulfide bond. Residue Asn-141 is glycosylated (N-linked (GlcNAc...) asparagine). 2 disulfide bridges follow: Cys-164/Cys-176 and Cys-169/Cys-172.

This sequence belongs to the protease inhibitor I3 (leguminous Kunitz-type inhibitor) family. Interacts with SCP1 and CP. As to expression, expressed at low levels in non-mycorrhizal roots.

It localises to the secreted. Its subcellular location is the extracellular space. The protein localises to the apoplast. In terms of biological role, protease inhibitor that, together with SCP1, controls mycorrhiza establishment and arbuscule development during root colonization by arbuscular mycorrhizal (AM) fungi (e.g. Rhizophagus irregularis), probably by degrading SCP1 in the apoplast of the periarbuscular region. The polypeptide is Kunitz type trypsin inhibitor 106 (Medicago truncatula (Barrel medic)).